Reading from the N-terminus, the 165-residue chain is Glutamyl-tRNA(Gln) amidotransferase subunit F, mitochondrial (165 aa).

The transit peptide at 1-19 directs the protein to the mitochondrion; it reads MKSILRSTTRNLITSSRRF.

Belongs to the GatF family. In terms of assembly, subunit of the heterotrimeric GatFAB amidotransferase (AdT) complex, composed of A, B and F subunits.

The protein localises to the mitochondrion inner membrane. It catalyses the reaction L-glutamyl-tRNA(Gln) + L-glutamine + ATP + H2O = L-glutaminyl-tRNA(Gln) + L-glutamate + ADP + phosphate + H(+). In terms of biological role, allows the formation of correctly charged Gln-tRNA(Gln) through the transamidation of misacylated Glu-tRNA(Gln) in the mitochondria. The reaction takes place in the presence of glutamine and ATP through an activated gamma-phospho-Glu-tRNA(Gln). Required for proper protein synthesis within the mitochondrion. This is Glutamyl-tRNA(Gln) amidotransferase subunit F, mitochondrial from Candida albicans (strain SC5314 / ATCC MYA-2876) (Yeast).